A 298-amino-acid chain; its full sequence is 4-diphosphocytidyl-2-C-methyl-D-erythritol kinase (298 aa).

K25 is an active-site residue. 109–119 contributes to the ATP binding site; sequence PVGGGFGGGSS. The active site involves D151.

This sequence belongs to the GHMP kinase family. IspE subfamily.

The catalysed reaction is 4-CDP-2-C-methyl-D-erythritol + ATP = 4-CDP-2-C-methyl-D-erythritol 2-phosphate + ADP + H(+). The protein operates within isoprenoid biosynthesis; isopentenyl diphosphate biosynthesis via DXP pathway; isopentenyl diphosphate from 1-deoxy-D-xylulose 5-phosphate: step 3/6. In terms of biological role, catalyzes the phosphorylation of the position 2 hydroxy group of 4-diphosphocytidyl-2C-methyl-D-erythritol. The protein is 4-diphosphocytidyl-2-C-methyl-D-erythritol kinase of Xylella fastidiosa (strain 9a5c).